A 248-amino-acid polypeptide reads, in one-letter code: MWIGVVSLFPDMFRAISDNGVTGRAVKNKLLSIQCWNPRDFTLDKHRTVDDRPYGGGPGMLMMVKPLRDAILAAKKAAREAGHEAKVIYLSPQGKRLDHCGAQLLSGSDALILVAGRYEGVDERLIESLVDEEWSVGDYVLSGGELPAMILIDAVVRFVPGVLGHVLSAEQDSFADGLLDCPHYTRPEVLDGKQVPSVLLSGDHEKIRLWRSKQALQRTKQRRPDLLNNLALTDEQAKLLAALESDSD.

S-adenosyl-L-methionine is bound by residues Gly116 and 136–141 (VGDYVL).

It belongs to the RNA methyltransferase TrmD family. Homodimer.

The protein resides in the cytoplasm. It catalyses the reaction guanosine(37) in tRNA + S-adenosyl-L-methionine = N(1)-methylguanosine(37) in tRNA + S-adenosyl-L-homocysteine + H(+). Specifically methylates guanosine-37 in various tRNAs. The sequence is that of tRNA (guanine-N(1)-)-methyltransferase from Psychromonas ingrahamii (strain DSM 17664 / CCUG 51855 / 37).